Reading from the N-terminus, the 95-residue chain is Acylphosphatase (95 aa).

Residues 5 to 93 form the Acylphosphatase-like domain; it reads RAHVFIRGKV…GEFKDFKILP (89 aa). Catalysis depends on residues Arg-20 and Asn-38.

The protein belongs to the acylphosphatase family.

It carries out the reaction an acyl phosphate + H2O = a carboxylate + phosphate + H(+). The protein is Acylphosphatase (acyP) of Pyrobaculum aerophilum (strain ATCC 51768 / DSM 7523 / JCM 9630 / CIP 104966 / NBRC 100827 / IM2).